The sequence spans 239 residues: Ribonuclease HII (239 aa).

Positions 30-221 (GPVAGVDEVG…VRRLVTAGTP (192 aa)) constitute an RNase H type-2 domain. A divalent metal cation-binding residues include D36, E37, and D130.

This sequence belongs to the RNase HII family. It depends on Mn(2+) as a cofactor. Mg(2+) is required as a cofactor.

It is found in the cytoplasm. The catalysed reaction is Endonucleolytic cleavage to 5'-phosphomonoester.. Its function is as follows. Endonuclease that specifically degrades the RNA of RNA-DNA hybrids. The chain is Ribonuclease HII from Mycobacterium sp. (strain JLS).